Here is a 282-residue protein sequence, read N- to C-terminus: Transformer-2 protein homolog alpha (282 aa).

Residues methionine 1 to asparagine 118 are disordered. Serine 2 is subject to N-acetylserine. Residues serine 2 and serine 14 each carry the phosphoserine modification. At threonine 24 the chain carries Phosphothreonine. Basic residues predominate over residues arginine 51–serine 84. Residues serine 82, serine 84, and serine 86 each carry the phosphoserine modification. A Phosphothreonine modification is found at threonine 88. Residues arginine 92–glycine 110 show a composition bias toward basic residues. 2 positions are modified to phosphoserine: serine 96 and serine 98. The 79-residue stretch at threonine 119–threonine 197 folds into the RRM domain. Lysine 198 participates in a covalent cross-link: Glycyl lysine isopeptide (Lys-Gly) (interchain with G-Cter in SUMO2). Residues lysine 198–glycine 225 form a linker region. Disordered stretches follow at residues histidine 201 to glycine 245 and serine 260 to tyrosine 282. Phosphothreonine occurs at positions 202 and 204. The span at serine 215–glycine 230 shows a compositional bias: gly residues. Residue arginine 232 is modified to Omega-N-methylarginine. A compositionally biased stretch (basic and acidic residues) spans arginine 232–glycine 245. A Phosphoserine modification is found at serine 236. Positions tyrosine 268–tyrosine 282 are enriched in basic residues.

It belongs to the splicing factor SR family. In terms of assembly, binds to A3 enhancer proteins SRp75, SRp55, SRp40 and SRp30. Interacts with ILDR1 (via C-terminus) and ILDR2. Phosphorylated in the RS domains.

It is found in the nucleus. Functionally, sequence-specific RNA-binding protein which participates in the control of pre-mRNA splicing. This Homo sapiens (Human) protein is Transformer-2 protein homolog alpha.